We begin with the raw amino-acid sequence, 236 residues long: Virion protein US10 homolog (236 aa).

Residues 1 to 32 form a disordered region; the sequence is MDGAYGHVHNGSPMAVDGEESGAGTGTGAGAD. The segment covering 21-31 has biased composition (gly residues); that stretch reads SGAGTGTGAGA. Residues 138-150 fold into a zinc finger; it reads CAYWCCLGHAFAC.

It belongs to the herpesviridae US10 family. Post-translationally, phosphorylated.

It localises to the virion tegument. The protein resides in the host nucleus matrix. This Equine herpesvirus 1 (strain Ab4p) (EHV-1) protein is Virion protein US10 homolog.